The primary structure comprises 901 residues: HTH-type transcriptional regulator MalT (901 aa).

39–46 provides a ligand contact to ATP; it reads SPAGYGKT. The 66-residue stretch at 829-894 folds into the HTH luxR-type domain; that stretch reads ELIRTSPLTQ…DAVQHAQQLL (66 aa). A DNA-binding region (H-T-H motif) is located at residues 853–872; the sequence is NEQIAGELEVAATTIKTHIR.

This sequence belongs to the MalT family. Monomer in solution. Oligomerizes to an active state in the presence of the positive effectors ATP and maltotriose.

Activated by ATP and maltotriose, which are both required for DNA binding. Functionally, positively regulates the transcription of the maltose regulon whose gene products are responsible for uptake and catabolism of malto-oligosaccharides. Specifically binds to the promoter region of its target genes, recognizing a short DNA motif called the MalT box. The chain is HTH-type transcriptional regulator MalT from Escherichia coli (strain ATCC 8739 / DSM 1576 / NBRC 3972 / NCIMB 8545 / WDCM 00012 / Crooks).